The sequence spans 414 residues: Gamma-glutamyl phosphate reductase (414 aa).

It belongs to the gamma-glutamyl phosphate reductase family.

The protein localises to the cytoplasm. It catalyses the reaction L-glutamate 5-semialdehyde + phosphate + NADP(+) = L-glutamyl 5-phosphate + NADPH + H(+). It functions in the pathway amino-acid biosynthesis; L-proline biosynthesis; L-glutamate 5-semialdehyde from L-glutamate: step 2/2. Catalyzes the NADPH-dependent reduction of L-glutamate 5-phosphate into L-glutamate 5-semialdehyde and phosphate. The product spontaneously undergoes cyclization to form 1-pyrroline-5-carboxylate. The sequence is that of Gamma-glutamyl phosphate reductase from Xanthomonas oryzae pv. oryzae (strain KACC10331 / KXO85).